The chain runs to 732 residues: MMISKKYTLWALNPLLLTMMAPAVAQQTDDETFVVSANRSNRTVAEMAQTTWVIENAELEQQIQGGKELKDALAQLIPGLDVSSRSRTNYGMNVRGRPLVVLVDGVRLNSSRTDSRQLDSIDPFNMHHIEVIFGATSLYGGGSTGGLINIVTKKGQPETMMEFEAGTKSGFSSSKDHDERIAGAVSGGNEHISGRLSVAYQKFGGWFDGNGDATLLDNTQTGLQYSDRLDIMGTGTLNIDESRQLQLITQYYKSQGDDDYGLNLGKGFSAIRGTSTPFVSNGLNSDRIPGTDGHLISLQYSDSAFLGQELVGQVYYRDESLRFYPFPTVNANKQVTAFSSSQQDTDQYGMKLTLNSKPMDGWQITWGLDADHERFTSNQMFFDLAQASASGGLNNKKIYTTGRYPSYDITNLAAFLQSGYDINNLFTLNGGVRYQYTENKIDDFIGYAQQRQIGAGKATSADAFWRLSRLRHFLFNAGLLMHITEPQQAWLNFSQGLELPDPGKYYGRGIYGAAVNGHLPLTKSVNVSDSKLEGVKVDSYELGWRFTGNNLRTQIAAYYSISDKSVVANKDLTISVVDDKRRIYGVEGAVDYLIPDTDWSTGVNFNVLKTESKVNGTWQKYDVKTASPSKATAYIGWAPDPWSLRVQSTTSFDVSDAQGYKVDGYTTVDLLGSYQLPVGTLSFSIENLFDRDYTTVWGQRAPLYYSPGYGPASLYDYKGRGRTFGLNYSVLF.

The N-terminal stretch at 1–25 (MMISKKYTLWALNPLLLTMMAPAVA) is a signal peptide. The TonB box signature appears at 31–38 (ETFVVSAN). In terms of domain architecture, TBDR plug spans 43–153 (TVAEMAQTTW…TGGLINIVTK (111 aa)). The TBDR beta-barrel domain occupies 158 to 732 (ETMMEFEAGT…TFGLNYSVLF (575 aa)). A TonB C-terminal box motif is present at residues 715–732 (YDYKGRGRTFGLNYSVLF).

The protein belongs to the TonB-dependent receptor family.

The protein resides in the cell outer membrane. Functionally, receptor for cloacin DF13/aerobactin. In Escherichia coli, this protein is Ferric aerobactin receptor (iutA).